We begin with the raw amino-acid sequence, 319 residues long: Glutathione synthetase (319 aa).

Residues 129–314 (KLAILNFSRF…VAAMFADAVA (186 aa)) form the ATP-grasp domain. 155–211 (LKEHGDIIIKPLDGMGGMGIFRLTEKDPNIGSILETLMQLDSRTIMAQRYIPEIVHG) is an ATP binding site. Positions 285 and 287 each coordinate Mg(2+).

This sequence belongs to the prokaryotic GSH synthase family. The cofactor is Mg(2+). Mn(2+) is required as a cofactor.

The enzyme catalyses gamma-L-glutamyl-L-cysteine + glycine + ATP = glutathione + ADP + phosphate + H(+). It participates in sulfur metabolism; glutathione biosynthesis; glutathione from L-cysteine and L-glutamate: step 2/2. In Neisseria meningitidis serogroup B (strain ATCC BAA-335 / MC58), this protein is Glutathione synthetase.